Here is a 328-residue protein sequence, read N- to C-terminus: MCHQQLVISWFSLVFLASPLMAIWELKKDVYVVELDWYPDAPGEMVVLTCDTPEEDGITWTLDQSGEVLGSGKTLTIQVKEFGDAGQYTCHKGGEALSHSLLLLHKKEDGIWSTDVLKDQKEPKNKTFLRCEAKNYSGRFTCWWLTTISTDLTFSVKSSRGSSNPQGVTCGAVTLSAERVRGDNKEYEYSVECQEDSACPAAEERLPIEVMVDAIHKLKYENYTSSFFIRDIIKPDPPKNLQLKPLKNSRQAEVSWEYPDTWSTPHSYFSLTFCIQVQGKSKREKKDRIFTDKTSATVICRKNASFSVQAQDRYYSSSWSEWASVPCS.

The first 22 residues, 1–22 (MCHQQLVISWFSLVFLASPLMA), serve as a signal peptide directing secretion. An Ig-like C2-type domain is found at 29-106 (DVYVVELDWY…LSHSLLLLHK (78 aa)). Cysteine 50 and cysteine 90 are joined by a disulfide. 4 N-linked (GlcNAc...) asparagine glycosylation sites follow: asparagine 125, asparagine 135, asparagine 222, and asparagine 303. The region spanning 237–328 (PPKNLQLKPL…WSEWASVPCS (92 aa)) is the Fibronectin type-III domain.

It belongs to the IL-12B family. In terms of assembly, heterodimer with IL12A; disulfide-linked. The heterodimer is known as interleukin IL-12. Heterodimer with IL23A; disulfide-linked. The heterodimer is known as interleukin IL-23. Also secreted as a monomer. Interacts with NBR1; this interaction promotes IL-12 secretion.

The protein localises to the secreted. Its function is as follows. Cytokine that can act as a growth factor for activated T and NK cells, enhance the lytic activity of NK/lymphokine-activated killer cells, and stimulate the production of IFN-gamma by resting PBMC. Associates with IL23A to form the IL-23 interleukin, a heterodimeric cytokine which functions in innate and adaptive immunity. IL-23 may constitute with IL-17 an acute response to infection in peripheral tissues. IL-23 binds to a heterodimeric receptor complex composed of IL12RB1 and IL23R, activates the Jak-Stat signaling cascade, stimulates memory rather than naive T-cells and promotes production of pro-inflammatory cytokines. IL-23 induces autoimmune inflammation and thus may be responsible for autoimmune inflammatory diseases and may be important for tumorigenesis. The chain is Interleukin-12 subunit beta (IL12B) from Papio anubis (Olive baboon).